The chain runs to 716 residues: Fatty acid oxidation complex subunit alpha (716 aa).

Residues 1–189 are enoyl-CoA hydratase/isomerase; it reads MIYQSPTIQV…KVGAIDAVVA (189 aa). D296 is a substrate binding site. Residues 311-716 are 3-hydroxyacyl-CoA dehydrogenase; sequence KDVNQAAVLG…AANNGSYYQA (406 aa). NAD(+) is bound by residues M324, D343, 400 to 402, K407, and S429; that span reads VVE. The active-site For 3-hydroxyacyl-CoA dehydrogenase activity is H450. Residue N453 participates in NAD(+) binding. Residues N500 and Y660 each coordinate substrate.

In the N-terminal section; belongs to the enoyl-CoA hydratase/isomerase family. This sequence in the C-terminal section; belongs to the 3-hydroxyacyl-CoA dehydrogenase family. Heterotetramer of two alpha chains (FadB) and two beta chains (FadA).

The catalysed reaction is a (3S)-3-hydroxyacyl-CoA + NAD(+) = a 3-oxoacyl-CoA + NADH + H(+). It catalyses the reaction a (3S)-3-hydroxyacyl-CoA = a (2E)-enoyl-CoA + H2O. The enzyme catalyses a 4-saturated-(3S)-3-hydroxyacyl-CoA = a (3E)-enoyl-CoA + H2O. It carries out the reaction (3S)-3-hydroxybutanoyl-CoA = (3R)-3-hydroxybutanoyl-CoA. The catalysed reaction is a (3Z)-enoyl-CoA = a 4-saturated (2E)-enoyl-CoA. It catalyses the reaction a (3E)-enoyl-CoA = a 4-saturated (2E)-enoyl-CoA. The protein operates within lipid metabolism; fatty acid beta-oxidation. Functionally, involved in the aerobic and anaerobic degradation of long-chain fatty acids via beta-oxidation cycle. Catalyzes the formation of 3-oxoacyl-CoA from enoyl-CoA via L-3-hydroxyacyl-CoA. It can also use D-3-hydroxyacyl-CoA and cis-3-enoyl-CoA as substrate. The chain is Fatty acid oxidation complex subunit alpha from Shewanella frigidimarina (strain NCIMB 400).